A 650-amino-acid polypeptide reads, in one-letter code: Acetyl-coenzyme A synthetase (650 aa).

CoA-binding positions include 191–194, Thr311, and Asn335; that span reads RGGR. Residues 387-389, 411-416, Asp500, and Arg515 contribute to the ATP site; these read GEP and DTWWQT. Ser523 is a binding site for CoA. Arg526 serves as a coordination point for ATP. Mg(2+) is bound by residues Val537, His539, and Val542. Arg584 is a CoA binding site. Lys609 carries the post-translational modification N6-acetyllysine.

This sequence belongs to the ATP-dependent AMP-binding enzyme family. Mg(2+) serves as cofactor. Post-translationally, acetylated. Deacetylation by the SIR2-homolog deacetylase activates the enzyme.

It carries out the reaction acetate + ATP + CoA = acetyl-CoA + AMP + diphosphate. Catalyzes the conversion of acetate into acetyl-CoA (AcCoA), an essential intermediate at the junction of anabolic and catabolic pathways. AcsA undergoes a two-step reaction. In the first half reaction, AcsA combines acetate with ATP to form acetyl-adenylate (AcAMP) intermediate. In the second half reaction, it can then transfer the acetyl group from AcAMP to the sulfhydryl group of CoA, forming the product AcCoA. In Shewanella sp. (strain MR-4), this protein is Acetyl-coenzyme A synthetase.